The chain runs to 468 residues: Anthocyanidin 3-O-glucoside 2'''-O-xylosyltransferase (468 aa).

Residues S284, 344 to 346 (IQQ), 361 to 369 (HCGFGSMWE), and 383 to 386 (HGEQ) each bind UDP-alpha-D-xylose.

Belongs to the UDP-glycosyltransferase family.

It carries out the reaction an anthocyanidin 3-O-beta-D-glucoside + UDP-alpha-D-xylose = an anthocyanidin 3-O-beta-D-sambubioside + UDP + 2 H(+). It participates in secondary metabolite biosynthesis; flavonoid biosynthesis. In terms of biological role, contributes to the last few anthocyanin biosynthetic steps. Converts cyanidin 3-O-glucoside to cyanidin 3-O-xylosyl(1-&gt;2)glucoside. Can use 3-O-glucosylated anthocyanidins/flavonols and uridine diphosphate (UDP)-xylose as substrates. The chain is Anthocyanidin 3-O-glucoside 2'''-O-xylosyltransferase (A3G2XYLT) from Arabidopsis thaliana (Mouse-ear cress).